Here is a 281-residue protein sequence, read N- to C-terminus: Ribosomal protein L11 methyltransferase (281 aa).

4 residues coordinate S-adenosyl-L-methionine: Thr-131, Gly-152, Asp-174, and Asn-217.

This sequence belongs to the methyltransferase superfamily. PrmA family.

The protein resides in the cytoplasm. The catalysed reaction is L-lysyl-[protein] + 3 S-adenosyl-L-methionine = N(6),N(6),N(6)-trimethyl-L-lysyl-[protein] + 3 S-adenosyl-L-homocysteine + 3 H(+). Methylates ribosomal protein L11. The chain is Ribosomal protein L11 methyltransferase from Phocaeicola vulgatus (strain ATCC 8482 / DSM 1447 / JCM 5826 / CCUG 4940 / NBRC 14291 / NCTC 11154) (Bacteroides vulgatus).